We begin with the raw amino-acid sequence, 69 residues long: Putative membrane protein insertion efficiency factor (69 aa).

Belongs to the UPF0161 family.

It localises to the cell membrane. Could be involved in insertion of integral membrane proteins into the membrane. The sequence is that of Putative membrane protein insertion efficiency factor from Clostridium perfringens (strain SM101 / Type A).